The primary structure comprises 455 residues: MLDIKLIREKPELVKKDLIKRGETEKVKWIDEILELDRKWRENLKKINQLRKERNQLAVQIGKRKKAGEPIEDLLARSNEIVKQIEELEKEVEALKKKIDYYLWRLPNITHESVPVGKDDTENVPIRFWGKAKVWEGFLESFKEQSLGKMDYEVLSWRPRLHVDMLELLRGADLERAAKVSGSRFYYLLNELVILDLALIRFALDRLIEKGFTPVIPPYMVRRFVEEGATTFEDFEDVIYKVEGEDLYLIPTAEHPLAGMHANEILDGKDLPLLYVGVSPCFRKEAGTAGKDTKGIFRVHQFHKVEQFVYSRPEESWEWHEKIIANAEELFQELEIPYRVVNICTGDLGYVAAKKYDIEAWMAGQGKFREVVSASNCTDWQARRLNIRFRDKTHEKPKFVHTLNSTAIATSRAIVAILENHQTEEGVVKLPKALWKYTGFKEILPASMKEKCCQD.

252–254 (TAE) contributes to the L-serine binding site. ATP is bound by residues 283–285 (RKE) and valine 299. L-serine is bound at residue glutamate 306. ATP is bound at residue 370 to 373 (EVVS). Threonine 406 is a binding site for L-serine.

Belongs to the class-II aminoacyl-tRNA synthetase family. Type-1 seryl-tRNA synthetase subfamily. As to quaternary structure, homodimer. The tRNA molecule binds across the dimer.

The protein resides in the cytoplasm. The catalysed reaction is tRNA(Ser) + L-serine + ATP = L-seryl-tRNA(Ser) + AMP + diphosphate + H(+). It catalyses the reaction tRNA(Sec) + L-serine + ATP = L-seryl-tRNA(Sec) + AMP + diphosphate + H(+). It participates in aminoacyl-tRNA biosynthesis; selenocysteinyl-tRNA(Sec) biosynthesis; L-seryl-tRNA(Sec) from L-serine and tRNA(Sec): step 1/1. Catalyzes the attachment of serine to tRNA(Ser). Is also able to aminoacylate tRNA(Sec) with serine, to form the misacylated tRNA L-seryl-tRNA(Sec), which will be further converted into selenocysteinyl-tRNA(Sec). This Thermococcus gammatolerans (strain DSM 15229 / JCM 11827 / EJ3) protein is Serine--tRNA ligase.